A 377-amino-acid polypeptide reads, in one-letter code: UPF0425 pyridoxal phosphate-dependent protein MTH_1914 (377 aa).

Lysine 207 is modified (N6-(pyridoxal phosphate)lysine).

It belongs to the UPF0425 family. Pyridoxal 5'-phosphate serves as cofactor.

This is UPF0425 pyridoxal phosphate-dependent protein MTH_1914 from Methanothermobacter thermautotrophicus (strain ATCC 29096 / DSM 1053 / JCM 10044 / NBRC 100330 / Delta H) (Methanobacterium thermoautotrophicum).